The chain runs to 178 residues: MPFACYFFIFINVGLGEGSALPVGVPVPWPSATPPTGWLKCNGAAFSAEEYPELAKAYPTNKLPDLRGEFIRGWDDGRGIDTGRSILSIQGYATEDHAHGLPSRSTIVTDATINFYFDEIWVNSGTDIIKRGNTNDAGLPAPDYGTFKTYKQSVDGLGAAASETRPRNIAFNYIVRAA.

Belongs to the tail fiber family.

This is an uncharacterized protein from Escherichia coli (strain K12).